The chain runs to 288 residues: NAD kinase (288 aa).

Catalysis depends on D70, which acts as the Proton acceptor. Residues 70 to 71, 144 to 145, R155, K172, D174, 185 to 190, and Q245 each bind NAD(+); these read DG, ND, and TGYSLS.

This sequence belongs to the NAD kinase family. A divalent metal cation is required as a cofactor.

It localises to the cytoplasm. It catalyses the reaction NAD(+) + ATP = ADP + NADP(+) + H(+). Functionally, involved in the regulation of the intracellular balance of NAD and NADP, and is a key enzyme in the biosynthesis of NADP. Catalyzes specifically the phosphorylation on 2'-hydroxyl of the adenosine moiety of NAD to yield NADP. The sequence is that of NAD kinase from Citrifermentans bemidjiense (strain ATCC BAA-1014 / DSM 16622 / JCM 12645 / Bem) (Geobacter bemidjiensis).